Consider the following 376-residue polypeptide: Succinyl-diaminopimelate desuccinylase (376 aa).

His66 is a Zn(2+) binding site. Residue Asp68 is part of the active site. Residue Asp99 coordinates Zn(2+). Glu133 functions as the Proton acceptor in the catalytic mechanism. Positions 134, 162, and 349 each coordinate Zn(2+).

It belongs to the peptidase M20A family. DapE subfamily. In terms of assembly, homodimer. Zn(2+) serves as cofactor. It depends on Co(2+) as a cofactor.

It carries out the reaction N-succinyl-(2S,6S)-2,6-diaminopimelate + H2O = (2S,6S)-2,6-diaminopimelate + succinate. Its pathway is amino-acid biosynthesis; L-lysine biosynthesis via DAP pathway; LL-2,6-diaminopimelate from (S)-tetrahydrodipicolinate (succinylase route): step 3/3. Its function is as follows. Catalyzes the hydrolysis of N-succinyl-L,L-diaminopimelic acid (SDAP), forming succinate and LL-2,6-diaminopimelate (DAP), an intermediate involved in the bacterial biosynthesis of lysine and meso-diaminopimelic acid, an essential component of bacterial cell walls. This Buchnera aphidicola subsp. Cinara cedri (strain Cc) protein is Succinyl-diaminopimelate desuccinylase.